The sequence spans 289 residues: 3-methyl-2-oxobutanoate hydroxymethyltransferase (289 aa).

Positions 1 to 15 (MSTTFKLDTSTSRAN) are enriched in polar residues. The segment at 1-21 (MSTTFKLDTSTSRANPTPAPM) is disordered. Aspartate 67 and aspartate 106 together coordinate Mg(2+). 3-methyl-2-oxobutanoate-binding positions include 67-68 (DS), aspartate 106, and lysine 136. Mg(2+) is bound at residue glutamate 138. Catalysis depends on glutamate 205, which acts as the Proton acceptor.

This sequence belongs to the PanB family. As to quaternary structure, homodecamer; pentamer of dimers. Mg(2+) serves as cofactor.

The protein localises to the cytoplasm. The enzyme catalyses 3-methyl-2-oxobutanoate + (6R)-5,10-methylene-5,6,7,8-tetrahydrofolate + H2O = 2-dehydropantoate + (6S)-5,6,7,8-tetrahydrofolate. It participates in cofactor biosynthesis; (R)-pantothenate biosynthesis; (R)-pantoate from 3-methyl-2-oxobutanoate: step 1/2. Catalyzes the reversible reaction in which hydroxymethyl group from 5,10-methylenetetrahydrofolate is transferred onto alpha-ketoisovalerate to form ketopantoate. The polypeptide is 3-methyl-2-oxobutanoate hydroxymethyltransferase (Erythrobacter litoralis (strain HTCC2594)).